The chain runs to 443 residues: 3-isopropylmalate dehydratase large subunit (443 aa).

C347, C407, and C410 together coordinate [4Fe-4S] cluster.

The protein belongs to the aconitase/IPM isomerase family. LeuC type 1 subfamily. In terms of assembly, heterodimer of LeuC and LeuD. Requires [4Fe-4S] cluster as cofactor.

It catalyses the reaction (2R,3S)-3-isopropylmalate = (2S)-2-isopropylmalate. It participates in amino-acid biosynthesis; L-leucine biosynthesis; L-leucine from 3-methyl-2-oxobutanoate: step 2/4. In terms of biological role, catalyzes the isomerization between 2-isopropylmalate and 3-isopropylmalate, via the formation of 2-isopropylmaleate. The sequence is that of 3-isopropylmalate dehydratase large subunit from Buchnera aphidicola subsp. Uroleucon obscurum.